The primary structure comprises 338 residues: DNA-directed RNA polymerase subunit alpha (338 aa).

The interval 1–234 (MIHKNWAELI…DQLGIFVNFE (234 aa)) is alpha N-terminal domain (alpha-NTD). The alpha C-terminal domain (alpha-CTD) stretch occupies residues 250-338 (FNPLLLKKVD…DLAKKFEDSF (89 aa)).

Belongs to the RNA polymerase alpha chain family. In terms of assembly, homodimer. The RNAP catalytic core consists of 2 alpha, 1 beta, 1 beta' and 1 omega subunit. When a sigma factor is associated with the core the holoenzyme is formed, which can initiate transcription.

It catalyses the reaction RNA(n) + a ribonucleoside 5'-triphosphate = RNA(n+1) + diphosphate. Functionally, DNA-dependent RNA polymerase catalyzes the transcription of DNA into RNA using the four ribonucleoside triphosphates as substrates. The polypeptide is DNA-directed RNA polymerase subunit alpha (Roseobacter denitrificans (strain ATCC 33942 / OCh 114) (Erythrobacter sp. (strain OCh 114))).